Reading from the N-terminus, the 504-residue chain is Cytochrome P450 6B7 (504 aa).

Residue cysteine 445 participates in heme binding.

This sequence belongs to the cytochrome P450 family. Requires heme as cofactor.

Its subcellular location is the endoplasmic reticulum membrane. It is found in the microsome membrane. It catalyses the reaction an organic molecule + reduced [NADPH--hemoprotein reductase] + O2 = an alcohol + oxidized [NADPH--hemoprotein reductase] + H2O + H(+). This Helicoverpa armigera (Cotton bollworm) protein is Cytochrome P450 6B7 (CYP6B7).